Consider the following 42-residue polypeptide: Aspartate-semialdehyde dehydrogenase leader peptide (42 aa).

The chain is Aspartate-semialdehyde dehydrogenase leader peptide from Streptococcus mutans serotype c (strain ATCC 700610 / UA159).